Consider the following 302-residue polypeptide: Sulfate adenylyltransferase subunit 2 (302 aa).

This sequence belongs to the PAPS reductase family. CysD subfamily. In terms of assembly, heterodimer composed of CysD, the smaller subunit, and CysN.

The enzyme catalyses sulfate + ATP + H(+) = adenosine 5'-phosphosulfate + diphosphate. Its pathway is sulfur metabolism; hydrogen sulfide biosynthesis; sulfite from sulfate: step 1/3. Its function is as follows. With CysN forms the ATP sulfurylase (ATPS) that catalyzes the adenylation of sulfate producing adenosine 5'-phosphosulfate (APS) and diphosphate, the first enzymatic step in sulfur assimilation pathway. APS synthesis involves the formation of a high-energy phosphoric-sulfuric acid anhydride bond driven by GTP hydrolysis by CysN coupled to ATP hydrolysis by CysD. The polypeptide is Sulfate adenylyltransferase subunit 2 (Escherichia coli O6:K15:H31 (strain 536 / UPEC)).